A 239-amino-acid polypeptide reads, in one-letter code: Phosphoribosylaminoimidazole-succinocarboxamide synthase (239 aa).

The protein belongs to the SAICAR synthetase family.

The enzyme catalyses 5-amino-1-(5-phospho-D-ribosyl)imidazole-4-carboxylate + L-aspartate + ATP = (2S)-2-[5-amino-1-(5-phospho-beta-D-ribosyl)imidazole-4-carboxamido]succinate + ADP + phosphate + 2 H(+). The protein operates within purine metabolism; IMP biosynthesis via de novo pathway; 5-amino-1-(5-phospho-D-ribosyl)imidazole-4-carboxamide from 5-amino-1-(5-phospho-D-ribosyl)imidazole-4-carboxylate: step 1/2. The protein is Phosphoribosylaminoimidazole-succinocarboxamide synthase of Acinetobacter baylyi (strain ATCC 33305 / BD413 / ADP1).